The following is a 220-amino-acid chain: Iron-sulfur cluster repair protein YtfE (220 aa).

It belongs to the RIC family. YtfE subfamily. In terms of assembly, homodimer.

The protein resides in the cytoplasm. Its function is as follows. Di-iron-containing protein involved in the repair of iron-sulfur clusters damaged by oxidative and nitrosative stress conditions. This chain is Iron-sulfur cluster repair protein YtfE, found in Enterobacter sp. (strain 638).